A 417-amino-acid polypeptide reads, in one-letter code: NADP-specific glutamate dehydrogenase A1 (417 aa).

Lysine 105 is a catalytic residue.

Belongs to the Glu/Leu/Phe/Val dehydrogenases family. In terms of assembly, homohexamer.

It carries out the reaction L-glutamate + NADP(+) + H2O = 2-oxoglutarate + NH4(+) + NADPH + H(+). This chain is NADP-specific glutamate dehydrogenase A1 (gdhA1), found in Halobacterium salinarum (Halobacterium halobium).